We begin with the raw amino-acid sequence, 430 residues long: Maintenance of mitochondrial morphology protein 1 (430 aa).

At 1-82 (MTEIDPNINE…ISNTWNFTQG (82 aa)) the chain is on the lumenal side. Residues 83-103 (LVVGQLSVIFLIIIFVKFFVF) traverse the membrane as a helical segment. Residues 104–430 (ADSSSSIPSK…AKPKDSDDTL (327 aa)) are Cytoplasmic-facing. 2 stretches are compositionally biased toward basic and acidic residues: residues 126–138 (RDNK…DRHN) and 335–346 (ENGKGSSSEDKK). Disordered regions lie at residues 126-154 (RDNK…TDDE) and 315-346 (QADQ…EDKK). The SMP-LTD domain occupies 178–408 (ASESLDWFNV…EPRFQVVKLP (231 aa)).

Belongs to the MMM1 family. Homodimer. Component of the ER-mitochondria encounter structure (ERMES) or MDM complex, composed of MMM1, MDM10, MDM12 and MDM34. An MMM1 homodimer associates with one molecule of MDM12 on each side in a pairwise head-to-tail manner, and the SMP-LTD domains of MMM1 and MDM12 generate a continuous hydrophobic tunnel for phospholipid trafficking.

It is found in the endoplasmic reticulum membrane. In terms of biological role, component of the ERMES/MDM complex, which serves as a molecular tether to connect the endoplasmic reticulum (ER) and mitochondria. Components of this complex are involved in the control of mitochondrial shape and protein biogenesis, and function in nonvesicular lipid trafficking between the ER and mitochondria. The MDM12-MMM1 subcomplex functions in the major beta-barrel assembly pathway that is responsible for biogenesis of all outer membrane beta-barrel proteins, and acts in a late step after the SAM complex. The MDM10-MDM12-MMM1 subcomplex further acts in the TOM40-specific pathway after the action of the MDM12-MMM1 complex. Essential for establishing and maintaining the structure of mitochondria and maintenance of mtDNA nucleoids. The protein is Maintenance of mitochondrial morphology protein 1 of Lodderomyces elongisporus (strain ATCC 11503 / CBS 2605 / JCM 1781 / NBRC 1676 / NRRL YB-4239) (Yeast).